We begin with the raw amino-acid sequence, 198 residues long: Glycerol-3-phosphate acyltransferase (198 aa).

5 consecutive transmembrane segments (helical) span residues 6 to 26, 55 to 75, 83 to 103, 113 to 133, and 154 to 174; these read FLPVALIIGYLFGSIPFGLIL, GLAAGTLLGDALKGTAAVIIS, AAMIAGLGAFLGHLFPVWLKF, IGILIGLFWPGAIFFCLVWLA, and IVLWAFGHTALAALFALLTLL.

This sequence belongs to the PlsY family. In terms of assembly, probably interacts with PlsX.

The protein resides in the cell inner membrane. The enzyme catalyses an acyl phosphate + sn-glycerol 3-phosphate = a 1-acyl-sn-glycero-3-phosphate + phosphate. The protein operates within lipid metabolism; phospholipid metabolism. Catalyzes the transfer of an acyl group from acyl-phosphate (acyl-PO(4)) to glycerol-3-phosphate (G3P) to form lysophosphatidic acid (LPA). This enzyme utilizes acyl-phosphate as fatty acyl donor, but not acyl-CoA or acyl-ACP. The chain is Glycerol-3-phosphate acyltransferase from Bradyrhizobium sp. (strain BTAi1 / ATCC BAA-1182).